The chain runs to 115 residues: MKFVLLFGVFLVTLFSYSSAEMLDDFDQADEDELLSLIEKEEARAKECTPRFYDCSHDRHSCCRSELFKGVCTCFYPEGGDNEVCTCQQPKHLKYMEKAAGKAKKFGGKIKKWFG.

The signal sequence occupies residues Met-1–Ala-20. A propeptide spanning residues Glu-21–Arg-44 is cleaved from the precursor. 4 cysteine pairs are disulfide-bonded: Cys-48–Cys-63, Cys-55–Cys-72, Cys-62–Cys-87, and Cys-74–Cys-85.

This sequence belongs to the neurotoxin 19 (CSTX) family. 01 subfamily. Expressed by the venom gland.

Its subcellular location is the secreted. The sequence is that of U3-lycotoxin-Ls1j from Lycosa singoriensis (Wolf spider).